A 224-amino-acid polypeptide reads, in one-letter code: Inhibitor of apoptosis protein (224 aa).

The stretch at 29–92 is one BIR repeat; sequence VDARNQSFAI…GFWSRNCGFM (64 aa). Zn(2+) contacts are provided by Cys62, Cys65, His82, and Cys89. The segment at 189-207 adopts a C4-type zinc-finger fold; it reads CMTCGIEPIKKDENFCNAC.

Belongs to the asfivirus IAP family. Interacts with subunit p17 of host CASP3.

Its subcellular location is the host cytoplasm. The protein localises to the virion. Prevent apoptosis of host cell by inhibiting caspase-3/CASP3 activation to promote the viral replication. Also induces the activation of host NF-kappaB. The chain is Inhibitor of apoptosis protein from Ornithodoros (relapsing fever ticks).